A 311-amino-acid polypeptide reads, in one-letter code: Aspartate carbamoyltransferase catalytic subunit (311 aa).

Carbamoyl phosphate contacts are provided by R55 and T56. L-aspartate is bound at residue K85. The carbamoyl phosphate site is built by R106, H135, and Q138. Positions 168 and 230 each coordinate L-aspartate. Carbamoyl phosphate is bound by residues L268 and P269.

The protein belongs to the aspartate/ornithine carbamoyltransferase superfamily. ATCase family. Heterododecamer (2C3:3R2) of six catalytic PyrB chains organized as two trimers (C3), and six regulatory PyrI chains organized as three dimers (R2).

It catalyses the reaction carbamoyl phosphate + L-aspartate = N-carbamoyl-L-aspartate + phosphate + H(+). It functions in the pathway pyrimidine metabolism; UMP biosynthesis via de novo pathway; (S)-dihydroorotate from bicarbonate: step 2/3. Catalyzes the condensation of carbamoyl phosphate and aspartate to form carbamoyl aspartate and inorganic phosphate, the committed step in the de novo pyrimidine nucleotide biosynthesis pathway. The polypeptide is Aspartate carbamoyltransferase catalytic subunit (Klebsiella pneumoniae subsp. pneumoniae (strain ATCC 700721 / MGH 78578)).